The primary structure comprises 1151 residues: SCF E3 ubiquitin ligase complex F-box protein GRR1 (1151 aa).

Over residues 1 to 18 the composition is skewed to basic and acidic residues; sequence MDQDNNNHNDSNRLHPPD. Residues 1-72 form a disordered region; the sequence is MDQDNNNHND…ATSERNASEV (72 aa). Residues 38–49 are compositionally biased toward low complexity; sequence NNNNNNNNNNNN. Positions 58 to 72 are enriched in basic and acidic residues; the sequence is RTRETATSERNASEV. Phosphoserine occurs at positions 199 and 300. Residues 314 to 361 form the F-box domain; the sequence is VFALNMLPSEILHLILDKLNQKYDIVKFLTVSKLWAEIIVKILYYRPH. 13 LRR repeats span residues 399–423, 424–449, 450–475, 476–501, 502–527, 528–553, 554–582, 583–608, 609–634, 635–660, 661–685, 686–714, and 715–740; these read GDYM…TLVF, CKHI…DITG, IRDV…YVPQ, ARNV…KITA, NNNM…DITL, SPNV…RITH, NTNI…DLSG, CENI…FLGK, CSRI…HFGH, CFNI…DFAC, CTNL…GLVK, CTQM…HLSY, and CSNL…SLTA. Over residues 1066–1080 the composition is skewed to low complexity; that stretch reads AGANDTSNNETNNGN. 2 disordered regions span residues 1066–1090 and 1118–1151; these read AGAN…NPNF and VRNN…EDML.

Interacts with SKP1. Component of the probable SCF(GRR1) complex containing CDC53, SKP1, RBX1 and GRR1.

The protein resides in the membrane. It functions in the pathway protein modification; protein ubiquitination. Functionally, substrate recognition component of a SCF (SKP1-CUL1-F-box protein) E3 ubiquitin-protein ligase complex which mediates the ubiquitination and subsequent proteasomal degradation of target proteins. Recognizes and directs ubiquitination of phosphorylated CLN1, CLN2 and GIC2. Probably constitutes the primary response element required for the generation or interpretation of the signal that induces glucose repression. The sequence is that of SCF E3 ubiquitin ligase complex F-box protein GRR1 (GRR1) from Saccharomyces cerevisiae (strain ATCC 204508 / S288c) (Baker's yeast).